We begin with the raw amino-acid sequence, 404 residues long: Photosynthetic reaction center cytochrome c subunit (404 aa).

Residues 1-22 form the signal peptide; that stretch reads MSPAQQLTLPAVIVVASVMLLG. Cysteine 23 carries N-palmitoyl cysteine lipidation. The S-diacylglycerol cysteine moiety is linked to residue cysteine 23. 16 residues coordinate heme: methionine 94, cysteine 107, cysteine 110, histidine 111, methionine 130, histidine 144, cysteine 152, cysteine 155, histidine 156, methionine 236, cysteine 247, cysteine 250, histidine 251, cysteine 307, cysteine 310, and histidine 311. The interval 346–404 is disordered; sequence ASEAAPAAATEAAPEAPAQEVPAAEAVPAAAEPGAAEAAGSVEPAPVEEVAPAPAAQRL.

Component of the photosynthetic reaction center composed of protein subunits L (PufL), M (PufM), H (PuhA) and cytochrome C (PufC). The reaction center interacts with light-harvesting antenna complex LH1. In terms of processing, binds 4 heme groups per subunit.

It localises to the cellular chromatophore membrane. In terms of biological role, the reaction center of purple bacteria contains a tightly bound cytochrome molecule which re-reduces the photo oxidized primary electron donor. The chain is Photosynthetic reaction center cytochrome c subunit from Thermochromatium tepidum (Chromatium tepidum).